The sequence spans 484 residues: mRNA decay activator protein ZFP36L2 (484 aa).

Phosphoserine occurs at positions 57 and 127. A disordered region spans residues 100–152 (YGQLKEPSGGSGTALVTKESKFRDRSFSENGERSQHLLHLQQQQKGGSGSQIN). Residues 117 to 134 (KESKFRDRSFSENGERSQ) show a composition bias toward basic and acidic residues. The short motif at 155–160 (RYKTEL) is the RNA-binding element. C3H1-type zinc fingers lie at residues 155–183 (RYKT…HGFH) and 193–221 (KYKT…HNAD). The RNA-binding stretch occupies residues 172–213 (YGEKCQFAHGFHELRSLTRHPKYKTELCRTFHTIGFCPYGPR). Disordered regions lie at residues 261-304 (SLSF…SCSS) and 395-484 (QQGL…ISDD). Pro residues predominate over residues 401-418 (PAPPPAQPPAAPAPPSPP). Positions 449–468 (YLSGSLSSGSLSGSESPSLD) are enriched in low complexity. Phosphoserine; by RPS6KA1 occurs at positions 480 and 482.

As to quaternary structure, associates with the cytoplasmic CCR4-NOT deadenylase to trigger ARE-containing mRNA deadenylation and decay processes. Interacts with CNOT7; this interaction is inhibited in response to phorbol 12-myristate 13-acetate (PMA) treatment in a p38 MAPK-dependent manner. Interacts with CNOT6L. In terms of processing, phosphorylated by RPS6KA1 at Ser-480 and Ser-482 upon phorbol 12-myristate 13-acetate (PMA) treatment; this phosphorylation results in dissociation of the CCR4-NOT-deadenylase complex and induces p38 MAPK-mediated stabilization of the low-density lipoprotein (LDL) receptor (LDLR) mRNA. Phosphorylation occurs during early preadipocyte differentiation. As to expression, expressed in preadipocytes and adipocytes (at protein level). Expressed at highest level in lymphoid tissues such as thymus, spleen, lung, uterus, ovary, small and large intestine, mammary gland, fat and bone marrow. Expressed at intermediate level in kidney, heart, adrenal, eye and fetal liver. Weakly expressed in brain, skeletal muscle and liver. Expressed through B lymphocyte development. Expressed in superior cervical ganglion (SCG) and dorsal root ganglion (DRG). Expressed in embryonic stem cells (ESCs). Expressed in oocytes.

The protein resides in the nucleus. It localises to the cytoplasm. Functionally, zinc-finger RNA-binding protein that destabilizes several cytoplasmic AU-rich element (ARE)-containing mRNA transcripts by promoting their poly(A) tail removal or deadenylation, and hence provide a mechanism for attenuating protein synthesis. Acts as a 3'-untranslated region (UTR) ARE mRNA-binding adapter protein to communicate signaling events to the mRNA decay machinery. Functions by recruiting the CCR4-NOT deadenylase complex and probably other components of the cytoplasmic RNA decay machinery to the bound ARE-containing mRNAs, and hence promotes ARE-mediated mRNA deadenylation and decay processes. Binds to 3'-UTR ARE of numerous mRNAs. Promotes ARE-containing mRNA decay of the low-density lipoprotein (LDL) receptor (LDLR) mRNA in response to phorbol 12-myristate 13-acetate (PMA) treatment in a p38 MAPK-dependent manner. Positively regulates early adipogenesis by promoting ARE-mediated mRNA decay of immediate early genes (IEGs). Plays a role in mature peripheral neuron integrity by promoting ARE-containing mRNA decay of the transcriptional repressor REST mRNA. Plays a role in ovulation and oocyte meiotic maturation by promoting ARE-mediated mRNA decay of the luteinizing hormone receptor LHCGR mRNA. Acts as a negative regulator of erythroid cell differentiation: promotes glucocorticoid-induced self-renewal of erythroid cells by binding mRNAs that are induced or highly expressed during terminal erythroid differentiation and promotes their degradation, preventing erythroid cell differentiation. In association with ZFP36L1 maintains quiescence on developing B lymphocytes by promoting ARE-mediated decay of several mRNAs encoding cell cycle regulators that help B cells progress through the cell cycle, and hence ensuring accurate variable-diversity-joining (VDJ) recombination process and functional immune cell formation. Together with ZFP36L1 is also necessary for thymocyte development and prevention of T-cell acute lymphoblastic leukemia (T-ALL) transformation by promoting ARE-mediated mRNA decay of the oncogenic transcription factor NOTCH1 mRNA. In Mus musculus (Mouse), this protein is mRNA decay activator protein ZFP36L2.